Reading from the N-terminus, the 732-residue chain is 1,4-alpha-glucan branching enzyme GlgB (732 aa).

The active-site Nucleophile is D409. The active-site Proton donor is E462.

This sequence belongs to the glycosyl hydrolase 13 family. GlgB subfamily. As to quaternary structure, monomer.

It catalyses the reaction Transfers a segment of a (1-&gt;4)-alpha-D-glucan chain to a primary hydroxy group in a similar glucan chain.. It functions in the pathway glycan biosynthesis; glycogen biosynthesis. Catalyzes the formation of the alpha-1,6-glucosidic linkages in glycogen by scission of a 1,4-alpha-linked oligosaccharide from growing alpha-1,4-glucan chains and the subsequent attachment of the oligosaccharide to the alpha-1,6 position. The sequence is that of 1,4-alpha-glucan branching enzyme GlgB from Corynebacterium diphtheriae (strain ATCC 700971 / NCTC 13129 / Biotype gravis).